The primary structure comprises 310 residues: Putative S-adenosyl-L-methionine-dependent methyltransferase MAB_4587c (310 aa).

Residues D126 and 155–156 (DL) contribute to the S-adenosyl-L-methionine site.

The protein belongs to the UPF0677 family.

Exhibits S-adenosyl-L-methionine-dependent methyltransferase activity. This is Putative S-adenosyl-L-methionine-dependent methyltransferase MAB_4587c from Mycobacteroides abscessus (strain ATCC 19977 / DSM 44196 / CCUG 20993 / CIP 104536 / JCM 13569 / NCTC 13031 / TMC 1543 / L948) (Mycobacterium abscessus).